The following is a 404-amino-acid chain: uncharacterized protein (404 aa).

A run of 11 helical transmembrane segments spans residues 15 to 35, 43 to 63, 84 to 104, 121 to 141, 154 to 174, 187 to 207, 231 to 251, 279 to 299, 316 to 336, 338 to 358, and 373 to 393; these read WSLLMGAAFLMATSAIGPGFL, NTLAASFGFVILISIILDIFA, MVLPGLGYFIAILVVLGGLAF, GITPETGALISAVIAILIFVI, IAGFVMIILTVYVAATTAPPV, ISIFAIVTLVGGTVGGYITFA, VVGILITSVMRIALFLAVLGV, IFGLIMWSAAITSVIGAAYTS, GIIIGFIVVSTLAFVTIGQPA, ILVLVGSLNGLILPIALGTLL, and PLWLTSTGALVVIVMAVMGIY.

This sequence belongs to the NRAMP family.

The protein localises to the cell membrane. This is an uncharacterized protein from Bacillus subtilis (strain 168).